Here is a 297-residue protein sequence, read N- to C-terminus: Diaminopimelate epimerase (297 aa).

Positions 13, 46, and 66 each coordinate substrate. Cysteine 76 functions as the Proton donor in the catalytic mechanism. Substrate-binding positions include 77–78 (GN), asparagine 174, asparagine 207, and 225–226 (ER). Catalysis depends on cysteine 234, which acts as the Proton acceptor. 235–236 (GT) is a substrate binding site.

This sequence belongs to the diaminopimelate epimerase family. In terms of assembly, homodimer.

The protein resides in the cytoplasm. It catalyses the reaction (2S,6S)-2,6-diaminopimelate = meso-2,6-diaminopimelate. It participates in amino-acid biosynthesis; L-lysine biosynthesis via DAP pathway; DL-2,6-diaminopimelate from LL-2,6-diaminopimelate: step 1/1. Functionally, catalyzes the stereoinversion of LL-2,6-diaminopimelate (L,L-DAP) to meso-diaminopimelate (meso-DAP), a precursor of L-lysine and an essential component of the bacterial peptidoglycan. This is Diaminopimelate epimerase from Leptothrix cholodnii (strain ATCC 51168 / LMG 8142 / SP-6) (Leptothrix discophora (strain SP-6)).